The primary structure comprises 351 residues: MQPFVYTTAPARIVFGTGSSVGVAEEIRRLGLSRALVLSTPHQKGDAEALAARLGPLAAGVFSDAAMHTPVEVTKRAVEAYRAAGADCVVSLGGGSTTGLGKAIALRTDAPQIVIPTTYAGSEVTPILGQTENGVKTTLRGPEILPEVVIYDAELTLGLPVGISMTSGLNAMAHAAEALYARDRNPIASMMAVEGLRAMIEALPGVRMEPQDTKARETALYGAWLCGTVLGAVGMSLHHKLCHTLGGSLDLPHAETHAVLLPYTIAYVEQAVPDQLAPLAALVGGRAGTGLYDFAARLGAPASLAALGVGGEDLDAMAELATANPYWCPRPVEKTAIRALLQRAFEGARPE.

The protein belongs to the iron-containing alcohol dehydrogenase family. In terms of assembly, homodimer.

It catalyses the reaction 3-oxoadipate + NAD(+) = maleylacetate + NADH + H(+). It participates in aromatic compound metabolism. Involved in the gamma-resorcylate (2,6-dihydroxybenzoate) catabolism. Catalyzes the reduction of maleylacetate to 3-oxoadipate. This is Maleylacetate reductase from Rhizobium sp. (strain MTP-10005).